We begin with the raw amino-acid sequence, 398 residues long: Phosphoglycerate kinase (398 aa).

Residues 23-25 (DFN), Arg-38, 61-64 (HMGK), Arg-122, and Arg-155 contribute to the substrate site. ATP-binding positions include Lys-206, Gly-297, Glu-328, and 354–357 (GGDS).

The protein belongs to the phosphoglycerate kinase family. In terms of assembly, monomer.

It localises to the cytoplasm. It catalyses the reaction (2R)-3-phosphoglycerate + ATP = (2R)-3-phospho-glyceroyl phosphate + ADP. It functions in the pathway carbohydrate degradation; glycolysis; pyruvate from D-glyceraldehyde 3-phosphate: step 2/5. In Clostridium botulinum (strain Loch Maree / Type A3), this protein is Phosphoglycerate kinase.